The following is a 143-amino-acid chain: Transcriptional regulator MraZ (143 aa).

SpoVT-AbrB domains lie at 5–47 (EFRH…PMKE) and 76–119 (ATEC…DEAR).

Belongs to the MraZ family. In terms of assembly, forms oligomers.

The protein resides in the cytoplasm. It localises to the nucleoid. This chain is Transcriptional regulator MraZ, found in Enterococcus hirae.